A 390-amino-acid polypeptide reads, in one-letter code: NADH-quinone oxidoreductase subunit D (390 aa).

It belongs to the complex I 49 kDa subunit family. In terms of assembly, NDH-1 is composed of 14 different subunits. Subunits NuoB, C, D, E, F, and G constitute the peripheral sector of the complex.

It is found in the cell inner membrane. It catalyses the reaction a quinone + NADH + 5 H(+)(in) = a quinol + NAD(+) + 4 H(+)(out). Its function is as follows. NDH-1 shuttles electrons from NADH, via FMN and iron-sulfur (Fe-S) centers, to quinones in the respiratory chain. The immediate electron acceptor for the enzyme in this species is believed to be ubiquinone. Couples the redox reaction to proton translocation (for every two electrons transferred, four hydrogen ions are translocated across the cytoplasmic membrane), and thus conserves the redox energy in a proton gradient. The polypeptide is NADH-quinone oxidoreductase subunit D (Geobacter sulfurreducens (strain ATCC 51573 / DSM 12127 / PCA)).